Here is a 183-residue protein sequence, read N- to C-terminus: Pentapeptide repeat protein MfpA (183 aa).

The Pentapeptide repeat domain maps to 113–147; that stretch reads SLVDTDLRKCVLRGADLSGARTTGARLDDADLRGA.

Belongs to the pentapeptide repeat protein family. In terms of assembly, homodimer. Probably interacts with DNA gyrase.

In terms of biological role, might be involved in fluoroquinolone resistance. Inhibits ATP-independent DNA relaxation, ATP-dependent DNA supercoiling and ATP-dependent decatenation by endogenous gyrase, 50% inhibition occurs at 2 uM; inhibition is abolished if GyrA is mutated (Asp-87 to Gly or His). Also inhibits fluoroquinolone-promoted dsDNA cleavage. Increases fluoroquinolone (ciprofloxacin or moxifloxacin) inhibition of gyrase supercoiling activity in a concentration-dependent manner. Inhibits DNA relaxation and supercoiling by E.coli gyrase. Forms a structure that exhibits size, shape and electrostatic similarity to B-form DNA; it may bind to DNA gyrase which is postulated to protect it from fluoroquinolones. The polypeptide is Pentapeptide repeat protein MfpA (Mycobacterium tuberculosis (strain ATCC 25618 / H37Rv)).